The sequence spans 353 residues: S-adenosylmethionine:tRNA ribosyltransferase-isomerase (353 aa).

This sequence belongs to the QueA family. In terms of assembly, monomer.

The protein localises to the cytoplasm. It catalyses the reaction 7-aminomethyl-7-carbaguanosine(34) in tRNA + S-adenosyl-L-methionine = epoxyqueuosine(34) in tRNA + adenine + L-methionine + 2 H(+). The protein operates within tRNA modification; tRNA-queuosine biosynthesis. Its function is as follows. Transfers and isomerizes the ribose moiety from AdoMet to the 7-aminomethyl group of 7-deazaguanine (preQ1-tRNA) to give epoxyqueuosine (oQ-tRNA). The sequence is that of S-adenosylmethionine:tRNA ribosyltransferase-isomerase from Blochmanniella floridana.